The sequence spans 233 residues: Chromosome partition protein MukE (233 aa).

The tract at residues 207 to 233 (SLSLHDESDDADVTMGNAADSVEDEQE) is disordered.

It belongs to the MukE family. Interacts, and probably forms a ternary complex, with MukF and MukB. The complex formation is stimulated by calcium or magnesium.

The protein resides in the cytoplasm. It is found in the nucleoid. Its function is as follows. Involved in chromosome condensation, segregation and cell cycle progression. May participate in facilitating chromosome segregation by condensation DNA from both sides of a centrally located replisome during cell division. Probably acts via its interaction with MukB and MukF. This chain is Chromosome partition protein MukE, found in Yersinia pestis.